We begin with the raw amino-acid sequence, 208 residues long: 3-demethoxyubiquinol 3-hydroxylase (208 aa).

Fe cation is bound by residues E57, E87, H90, E139, E171, and H174.

The protein belongs to the COQ7 family. Requires Fe cation as cofactor.

It is found in the cell membrane. It carries out the reaction a 5-methoxy-2-methyl-3-(all-trans-polyprenyl)benzene-1,4-diol + AH2 + O2 = a 3-demethylubiquinol + A + H2O. Its pathway is cofactor biosynthesis; ubiquinone biosynthesis. Functionally, catalyzes the hydroxylation of 2-nonaprenyl-3-methyl-6-methoxy-1,4-benzoquinol during ubiquinone biosynthesis. In Verminephrobacter eiseniae (strain EF01-2), this protein is 3-demethoxyubiquinol 3-hydroxylase.